The following is a 559-amino-acid chain: Laccase-7 (559 aa).

An N-terminal signal peptide occupies residues 1-28 (MVIPWCSSMMRLLWFLFALLLARSVADA). 3 N-linked (GlcNAc...) asparagine glycosylation sites follow: asparagine 32, asparagine 47, and asparagine 82. Plastocyanin-like domains follow at residues 36–152 (TVES…PRNG) and 163–316 (EVPI…YNTT). Histidine 86 and histidine 88 together coordinate Cu cation. Asparagine 112 and asparagine 120 each carry an N-linked (GlcNAc...) asparagine glycan. Cu cation contacts are provided by histidine 131 and histidine 133. 8 N-linked (GlcNAc...) asparagine glycosylation sites follow: asparagine 151, asparagine 210, asparagine 220, asparagine 257, asparagine 278, asparagine 314, asparagine 363, and asparagine 443. Residues 396–543 (FRLPSQMSLL…GMVFAVDNGT (148 aa)) enclose the Plastocyanin-like 3 domain. Residues histidine 461, histidine 464, and histidine 466 each contribute to the Cu cation site. Residue asparagine 484 is glycosylated (N-linked (GlcNAc...) asparagine). Positions 522, 523, 524, and 528 each coordinate Cu cation. Asparagine 541 is a glycosylation site (N-linked (GlcNAc...) asparagine).

The protein belongs to the multicopper oxidase family. Cu cation serves as cofactor.

The protein localises to the secreted. It localises to the extracellular space. It is found in the apoplast. It catalyses the reaction 4 hydroquinone + O2 = 4 benzosemiquinone + 2 H2O. Lignin degradation and detoxification of lignin-derived products. The sequence is that of Laccase-7 (LAC7) from Oryza sativa subsp. japonica (Rice).